Here is a 534-residue protein sequence, read N- to C-terminus: (E)-beta-farnesene synthase (534 aa).

Positions 287, 291, 431, 435, and 439 each coordinate Mg(2+). The DDXXD motif motif lies at 287-291; that stretch reads DDMMD.

Belongs to the terpene synthase family. Mg(2+) is required as a cofactor. Co(2+) serves as cofactor. It depends on Mn(2+) as a cofactor.

The protein localises to the cytoplasm. The enzyme catalyses (2E,6E)-farnesyl diphosphate = (E)-beta-farnesene + diphosphate. The protein operates within secondary metabolite biosynthesis; terpenoid biosynthesis. Functionally, sesquiterpene cyclase catalyzing the production of beta-farnesene and alpha-bergamotene in equal amounts from farnesyl diphosphate. Involved in indirect defense by producing volatile signals attracting natural enemies of herbivores. The polypeptide is (E)-beta-farnesene synthase (Zea mays subsp. mexicana (Mexican teosinte)).